The following is a 377-amino-acid chain: Unsaturated glucuronyl hydrolase (377 aa).

Catalysis depends on D88, which acts as the Nucleophile. D149 functions as the Proton donor in the catalytic mechanism.

Belongs to the glycosyl hydrolase 88 family. In terms of assembly, monomer.

The protein localises to the cytoplasm. The enzyme catalyses beta-D-Delta(4)-GlcA-(1-&gt;4)-beta-D-Glc-(1-&gt;4)-alpha-L-Rha-(1-&gt;3)-D-Glc + H2O = beta-D-Glc-(1-&gt;4)-alpha-L-Rha-(1-&gt;3)-D-Glc + 5-dehydro-4-deoxy-D-glucuronate. Partially inhibited by divalent metal ions such as calcium, copper, iron and mercury. Functionally, catalyzes the hydrolysis of oligosaccharides with unsaturated glucuronyl residues at the non-reducing terminal, to a sugar or an amino sugar, and an unsaturated D-glucuronic acid (GlcA), which is nonenzymatically converted immediately to alpha-keto acid. The protein is Unsaturated glucuronyl hydrolase (ugl) of Bacillus sp. (strain GL1).